A 63-amino-acid polypeptide reads, in one-letter code: MSVFLIVLSCITLAFASGAVYYIKLLSQAASYPPKRVIRQKALVCSTGTAFTLCLIFFTKLLA.

2 helical membrane-spanning segments follow: residues 3–23 and 42–62; these read VFLIVLSCITLAFASGAVYYI and ALVCSTGTAFTLCLIFFTKLL.

It is found in the cell membrane. This is an uncharacterized protein from Bacillus subtilis (strain 168).